The following is a 147-amino-acid chain: Protein phosphatase 1 regulatory subunit 14A (147 aa).

A compositionally biased stretch (basic residues) spans M1 to L11. The disordered stretch occupies residues M1–V37. Position 26 is a phosphoserine (S26). The interval A35–K120 is inhibitory. T38 carries the post-translational modification Phosphothreonine. The segment at L118–P147 is disordered. Positions P127–P137 are enriched in polar residues. A phosphoserine mark is found at S128, S134, and S136. Residues R138–P147 show a composition bias toward basic and acidic residues.

Belongs to the PP1 inhibitor family. Post-translationally, phosphorylation of Thr-38 induces a conformation change. As to expression, detected in aorta smooth muscle and bladder.

The protein localises to the cytoplasm. Inhibitor of PPP1CA. Has over 1000-fold higher inhibitory activity when phosphorylated, creating a molecular switch for regulating the phosphorylation status of PPP1CA substrates and smooth muscle contraction. This chain is Protein phosphatase 1 regulatory subunit 14A (CPI17), found in Sus scrofa (Pig).